Here is a 128-residue protein sequence, read N- to C-terminus: 3-aminoacrylate deaminase RutC (128 aa).

It belongs to the RutC family.

The catalysed reaction is (Z)-3-aminoacrylate + H2O + H(+) = 3-oxopropanoate + NH4(+). Its function is as follows. Involved in pyrimidine catabolism. Catalyzes the deamination of 3-aminoacrylate to malonic semialdehyde, a reaction that can also occur spontaneously. RutC may facilitate the reaction and modulate the metabolic fitness, rather than catalyzing essential functions. This is 3-aminoacrylate deaminase RutC from Enterobacter cloacae subsp. cloacae (strain ATCC 13047 / DSM 30054 / NBRC 13535 / NCTC 10005 / WDCM 00083 / NCDC 279-56).